The primary structure comprises 358 residues: UDP-N-acetylglucosamine--N-acetylmuramyl-(pentapeptide) pyrophosphoryl-undecaprenol N-acetylglucosamine transferase (358 aa).

UDP-N-acetyl-alpha-D-glucosamine-binding positions include 11–13, Asn122, Arg161, Ser189, Ile243, 262–267, and Gln288; these read TGG and ALTVCE.

The protein belongs to the glycosyltransferase 28 family. MurG subfamily.

It localises to the cell inner membrane. It catalyses the reaction di-trans,octa-cis-undecaprenyl diphospho-N-acetyl-alpha-D-muramoyl-L-alanyl-D-glutamyl-meso-2,6-diaminopimeloyl-D-alanyl-D-alanine + UDP-N-acetyl-alpha-D-glucosamine = di-trans,octa-cis-undecaprenyl diphospho-[N-acetyl-alpha-D-glucosaminyl-(1-&gt;4)]-N-acetyl-alpha-D-muramoyl-L-alanyl-D-glutamyl-meso-2,6-diaminopimeloyl-D-alanyl-D-alanine + UDP + H(+). It participates in cell wall biogenesis; peptidoglycan biosynthesis. Cell wall formation. Catalyzes the transfer of a GlcNAc subunit on undecaprenyl-pyrophosphoryl-MurNAc-pentapeptide (lipid intermediate I) to form undecaprenyl-pyrophosphoryl-MurNAc-(pentapeptide)GlcNAc (lipid intermediate II). In Coxiella burnetii (strain Dugway 5J108-111), this protein is UDP-N-acetylglucosamine--N-acetylmuramyl-(pentapeptide) pyrophosphoryl-undecaprenol N-acetylglucosamine transferase.